The chain runs to 80 residues: Exodeoxyribonuclease 7 small subunit (80 aa).

This sequence belongs to the XseB family. As to quaternary structure, heterooligomer composed of large and small subunits.

The protein localises to the cytoplasm. The catalysed reaction is Exonucleolytic cleavage in either 5'- to 3'- or 3'- to 5'-direction to yield nucleoside 5'-phosphates.. Bidirectionally degrades single-stranded DNA into large acid-insoluble oligonucleotides, which are then degraded further into small acid-soluble oligonucleotides. The chain is Exodeoxyribonuclease 7 small subunit from Escherichia coli (strain SE11).